The primary structure comprises 49 residues: Large ribosomal subunit protein bL33C (49 aa).

This sequence belongs to the bacterial ribosomal protein bL33 family.

In Lactococcus lactis subsp. cremoris (strain MG1363), this protein is Large ribosomal subunit protein bL33C.